A 122-amino-acid polypeptide reads, in one-letter code: uncharacterized protein (122 aa).

Residues 1–18 (MYSMAFLASSGLVANSSA) form the signal peptide. N-linked (GlcNAc...) asparagine glycosylation occurs at N15.

This is an uncharacterized protein from Saccharomyces cerevisiae (strain ATCC 204508 / S288c) (Baker's yeast).